We begin with the raw amino-acid sequence, 139 residues long: MANAASGMAVHDDCKLRFLELKAKRTHRFIVYKIEEKQKQVVVEKVGQPIQTYEEFAACLPADECRYAIYDFDFVTAENCQKSKIFFIAWCPDIAKVRSKMIYASSKDRFKRELDGIQVELQATDPTEMDLDVFRSRAN.

Residues 5–139 (ASGMAVHDDC…DLDVFRSRAN (135 aa)) enclose the ADF-H domain. Position 6 is a phosphoserine; by CPK3 (serine 6).

This sequence belongs to the actin-binding proteins ADF family. As to quaternary structure, interacts with the 14-3-3-like protein GRF6/AFT1. Post-translationally, phosphorylation at Ser-6 by CPK3/CDPK6 inhibits actin-depolimerizing activity. As to expression, expressed in vascular tissues of all organs.

The protein resides in the cytoplasm. It is found in the cytoskeleton. Functionally, actin-depolymerizing protein. Stimulates F-actin depolymerization. Involved in plant development, cell organ expansion and flowering by controlling breakdown of thick actin cables. Severs actin filaments or bundles and promotes actin cytoskeleton disassembly. Binds monomeric actin (G-actin) with a marked preference for the ADP-loaded form and inhibits the rate of nucleotide exchange on G-actin. This chain is Actin-depolymerizing factor 1 (ADF1), found in Arabidopsis thaliana (Mouse-ear cress).